The chain runs to 198 residues: Sensory transduction protein RegX3 (198 aa).

Residues 1-87 enclose the Response regulatory domain; it reads MVTDGPAALA…ELIARIRAVL (87 aa). The residue at position 23 (Asp-23) is a 4-aspartylphosphate. Residues 99–198 constitute a DNA-binding region (ompR/PhoB-type); it reads DGVLESGPLR…VRGLGYKLES (100 aa).

Phosphorylated by SenX3.

In terms of biological role, member of the two-component regulatory system SenX3/RegX3. In Mycobacterium leprae (strain TN), this protein is Sensory transduction protein RegX3 (rgx3).